Here is a 36-residue protein sequence, read N- to C-terminus: Egg-laying hormone (36 aa).

K36 bears the Lysine amide mark.

It belongs to the molluscan ELH family. In terms of tissue distribution, bag cell neurons.

Its subcellular location is the secreted. In terms of biological role, ELH acts as a neurotransmitter locally, upon neurons of the abdominal ganglion and as a hormone by diffusing into the circulating hemolymph and modulating the activity of other organs. It specifically causes contraction of smooth muscle in the ovotestis and expulsion of the egg string. This Aplysia fasciata (Mottled sea hare) protein is Egg-laying hormone.